The chain runs to 99 residues: Small ribosomal subunit protein bS20 (99 aa).

Basic residues predominate over residues 1–20 (MASAKPKKKNPRLASGRKRV). Residues 1 to 21 (MASAKPKKKNPRLASGRKRVR) form a disordered region.

Belongs to the bacterial ribosomal protein bS20 family.

Binds directly to 16S ribosomal RNA. In Verminephrobacter eiseniae (strain EF01-2), this protein is Small ribosomal subunit protein bS20.